We begin with the raw amino-acid sequence, 224 residues long: tRNA (guanine-N(7)-)-methyltransferase (224 aa).

Residues glutamate 45, glutamate 70, aspartate 97, and aspartate 119 each coordinate S-adenosyl-L-methionine. The active site involves aspartate 119. Substrate contacts are provided by residues lysine 123, aspartate 155, and 199–202 (TEYE).

This sequence belongs to the class I-like SAM-binding methyltransferase superfamily. TrmB family.

It carries out the reaction guanosine(46) in tRNA + S-adenosyl-L-methionine = N(7)-methylguanosine(46) in tRNA + S-adenosyl-L-homocysteine. It participates in tRNA modification; N(7)-methylguanine-tRNA biosynthesis. Its function is as follows. Catalyzes the formation of N(7)-methylguanine at position 46 (m7G46) in tRNA. This is tRNA (guanine-N(7)-)-methyltransferase from Ureaplasma urealyticum serovar 10 (strain ATCC 33699 / Western).